Here is a 100-residue protein sequence, read N- to C-terminus: UPF0125 protein HD_1828 (100 aa).

Belongs to the UPF0125 (RnfH) family.

The polypeptide is UPF0125 protein HD_1828 (Haemophilus ducreyi (strain 35000HP / ATCC 700724)).